Here is a 699-residue protein sequence, read N- to C-terminus: Polyribonucleotide nucleotidyltransferase (699 aa).

2 residues coordinate Mg(2+): Asp493 and Asp499. Residues 560 to 620 (PLIANIEIDP…NKVNQAIEYI (61 aa)) form the KH domain. One can recognise an S1 motif domain in the interval 630–697 (GDMFEGKITR…DSGRIQLGKA (68 aa)).

Belongs to the polyribonucleotide nucleotidyltransferase family. It depends on Mg(2+) as a cofactor.

The protein resides in the cytoplasm. The catalysed reaction is RNA(n+1) + phosphate = RNA(n) + a ribonucleoside 5'-diphosphate. Functionally, involved in mRNA degradation. Catalyzes the phosphorolysis of single-stranded polyribonucleotides processively in the 3'- to 5'-direction. The protein is Polyribonucleotide nucleotidyltransferase of Thermosipho melanesiensis (strain DSM 12029 / CIP 104789 / BI429).